Reading from the N-terminus, the 331-residue chain is Biotin synthase (331 aa).

The region spanning 52 to 277 (PDVEVEGIIS…RTMLRFAGGR (226 aa)) is the Radical SAM core domain. The [4Fe-4S] cluster site is built by cysteine 67, cysteine 71, and cysteine 74. Residues cysteine 110, cysteine 143, cysteine 202, and arginine 272 each contribute to the [2Fe-2S] cluster site.

It belongs to the radical SAM superfamily. Biotin synthase family. As to quaternary structure, homodimer. [4Fe-4S] cluster serves as cofactor. Requires [2Fe-2S] cluster as cofactor.

It catalyses the reaction (4R,5S)-dethiobiotin + (sulfur carrier)-SH + 2 reduced [2Fe-2S]-[ferredoxin] + 2 S-adenosyl-L-methionine = (sulfur carrier)-H + biotin + 2 5'-deoxyadenosine + 2 L-methionine + 2 oxidized [2Fe-2S]-[ferredoxin]. It participates in cofactor biosynthesis; biotin biosynthesis; biotin from 7,8-diaminononanoate: step 2/2. Catalyzes the conversion of dethiobiotin (DTB) to biotin by the insertion of a sulfur atom into dethiobiotin via a radical-based mechanism. The sequence is that of Biotin synthase from Mycolicibacterium vanbaalenii (strain DSM 7251 / JCM 13017 / BCRC 16820 / KCTC 9966 / NRRL B-24157 / PYR-1) (Mycobacterium vanbaalenii).